Here is a 95-residue protein sequence, read N- to C-terminus: Small ribosomal subunit protein bS6 (95 aa).

The protein belongs to the bacterial ribosomal protein bS6 family.

Functionally, binds together with bS18 to 16S ribosomal RNA. In Desulforamulus reducens (strain ATCC BAA-1160 / DSM 100696 / MI-1) (Desulfotomaculum reducens), this protein is Small ribosomal subunit protein bS6.